A 4034-amino-acid polypeptide reads, in one-letter code: Polyketide synthase-nonribosomal peptide synthetase ACE1 (4034 aa).

Residues 10 to 448 (TEPIAIIGSG…GANAHVILES (439 aa)) enclose the Ketosynthase family 3 (KS3) domain. Active-site for beta-ketoacyl synthase activity residues include cysteine 183, histidine 322, and histidine 368. The acyl transferase stretch occupies residues 560–879 (VFTGQGAQWA…PYFGCLSRGT (320 aa)). The tract at residues 951-1082 (NELLGTRLPD…GDLVVLLGEP (132 aa)) is N-terminal hotdog fold. The region spanning 951–1257 (NELLGTRLPD…TKPLSPPSAA (307 aa)) is the PKS/mFAS DH domain. The tract at residues 952-1252 (ELLGTRLPDD…LQGLHTKPLS (301 aa)) is dehydratase (DH) domain. The active-site Proton acceptor; for dehydratase activity is histidine 983. Residues 1097 to 1257 (MKDIDEERFY…TKPLSPPSAA (161 aa)) are C-terminal hotdog fold. Aspartate 1157 serves as the catalytic Proton donor; for dehydratase activity. The tract at residues 1396–1594 (NMLNRFYSDA…SGADIVTPHH (199 aa)) is methyltransferase (MT) domain. Residues 2144 to 2317 (TYWLVGLTGG…AGSSVEIGCI (174 aa)) form a ketoreductase (KR)domain region. A Carrier 1 domain is found at 2424–2505 (KSSEEVLDIL…LLLEFVQGLI (82 aa)). Position 2465 is an O-(pantetheine 4'-phosphoryl)serine (serine 2465). The tract at residues 2512-2598 (KLDGSDGADA…SPTTSASMAS (87 aa)) is disordered. Over residues 2556 to 2577 (PSGPASPTSPSSATASPGRSRS) the composition is skewed to low complexity. Residues 2586 to 2598 (TPVSPTTSASMAS) are compositionally biased toward polar residues. The segment at 2608 to 3037 (TVPVSFGQSR…ATSLNRPAIY (430 aa)) is condensation. Residues 3073-3473 (KYATKFALRN…GGLIIEGRID (401 aa)) form an adenylation region. The region spanning 3598–3678 (AELGSDQARM…AMTDLVLSDD (81 aa)) is the Carrier 2 domain. An O-(pantetheine 4'-phosphoryl)serine modification is found at serine 3638. Positions 3719–3944 (LTGATGFLGR…DFVSVENVAA (226 aa)) are reductase-like.

Belongs to the NRP synthetase family.

It is found in the cytoplasm. Its pathway is secondary metabolite biosynthesis. Functionally, hybrid PKS-NRPS synthetase; part of the gene cluster that mediates the biosynthesis of a tyrosine-derived cytochalasan acting as a fungal signal recognized by resistant rice plants and leads to avirulence in Pi33 resistant rice cultivars. The first step in the pathway is catalyzed by the hybrid PKS-NRPS ACE1, assisted by the enoyl reductase RAP1, that are responsible for fusion of the tyrosine precursor and the polyketide backbone. The polyketide synthase module (PKS) of ACE1 is responsible for the synthesis of the polyketide backbone and the downstream nonribosomal peptide synthetase (NRPS) amidates the carboxyl end of the polyketide with the tyrosine precursor. Because ACE1 lacks a designated enoylreductase (ER) domain, the required activity is provided the enoyl reductase RAP1. Reduction by the hydrolyase ORFZ, followed by dehydration and intra-molecular Diels-Alder cyclization by the Diels-Alderase ORF3 then yield the required isoindolone-fused macrocycle. A number of oxidative steps catalyzed by the tailoring enzymes identified within the cluster, including cytochrome P450 monooxygenases CYP1 to CYP4, the FAD-linked oxidoreductase OXR2 and the short-chain dehydrogenase/reductase OXR1, are further required to afford the final cytochalasans that confer avirulence and which have still to be identified. The monooxygenase CYP1 has been shown to be a site-selective C-18 hydroxylase whereas the function of CYP3 is the site-selective epoxidation of the C-6/C-7 olefin that is present in some intermediate compounds. Finally, SYN2 and RAP2 are not required for avirulence in Pi33 resistant rice cultivars. The chain is Polyketide synthase-nonribosomal peptide synthetase ACE1 from Pyricularia oryzae (strain 70-15 / ATCC MYA-4617 / FGSC 8958) (Rice blast fungus).